We begin with the raw amino-acid sequence, 810 residues long: Volume-regulated anion channel subunit LRRC8A (810 aa).

Met1 is subject to N-acetylmethionine. Residues 1-22 (MIPVTELRYFADTQPAYRILKP) lie on the Cytoplasmic side of the membrane. A helical transmembrane segment spans residues 23-47 (WWDVFTDYISIVMLMIAVFGGTLQV). Topologically, residues 48–123 (TQDKMICLPC…YENRLHWFAK (76 aa)) are extracellular. 3 disulfide bridges follow: Cys54-Cys310, Cys57-Cys65, and Cys113-Cys295. Asn66 and Asn83 each carry an N-linked (GlcNAc...) asparagine glycan. Residues 124–142 (YFPYLVLLHTLIFLACSNF) traverse the membrane as a helical segment. The Cytoplasmic segment spans residues 143 to 264 (WFKFPRTSSK…EEGDIVYRLY (122 aa)). Thr200 is modified (phosphothreonine). Ser202 carries the phosphoserine modification. Position 215 is a phosphothreonine (Thr215). Ser217 is modified (phosphoserine). Residues 265–286 (MRQTIIKVIKFFLIICYTVYYV) form a helical membrane-spanning segment. Topologically, residues 287–316 (HNIKFDVDCTVDIESLTGYRTYRCAHPLAT) are extracellular. Residues 317–341 (LFKILASFYISLVIFYGLICMYTLW) traverse the membrane as a helical segment. Residues 342 to 810 (WMLRRSLKKY…RLWRADKEQA (469 aa)) are Cytoplasmic-facing. LRR repeat units lie at residues 399 to 422 (ENKL…RLTK), 423 to 445 (NAQD…VFDL), 447 to 468 (ELEV…IAQL), 469 to 492 (TGLK…AFLR), 493 to 515 (ENLR…IYSL), 518 to 542 (LEEL…GLRE), 543 to 565 (LKRL…VTDV), 567 to 589 (VHLQ…SLKK), 590 to 613 (MVNL…IFSL), 614 to 637 (HNLQ…SFQH), 639 to 661 (HRLT…IGNL), 662 to 684 (TNLE…LFYC), 686 to 707 (KLRY…IGLL), 708 to 730 (QNLQ…LFQC), 732 to 753 (KLRA…VGEL), 754 to 776 (TNLT…LGEC), and 778 to 801 (LLKR…VKER). A Di-leucine motif motif is present at residues 706-707 (LL).

This sequence belongs to the LRRC8 family. In terms of assembly, heterohexamer; oligomerizes with other LRRC8 proteins (LRRC8B, LRRC8C, LRRC8D and/or LRRC8E) to form a heterohexamer. Can form homohexamers in vitro, but these have lower conductance than heterohexamers. Detected in a channel complex that contains LRRC8A, LRRC8C and LRRC8E. In vivo, the subunit composition may depend primarily on expression levels, and heterooligomeric channels containing various proportions of the different LRRC8 proteins may coexist. Interact with GRB2. Interacts with NOX4; this interaction prevents the ubiquitin-mediated degradation of LRRC8A. N-glycosylated.

It localises to the cell membrane. The protein localises to the lysosome membrane. The enzyme catalyses chloride(in) = chloride(out). It catalyses the reaction iodide(out) = iodide(in). It carries out the reaction taurine(out) = taurine(in). The catalysed reaction is L-aspartate(out) = L-aspartate(in). The enzyme catalyses L-glutamate(out) = L-glutamate(in). It catalyses the reaction myo-inositol(out) = myo-inositol(in). It carries out the reaction 2',3'-cGAMP(out) = 2',3'-cGAMP(in). With respect to regulation, inhibited by (4-[(2-butyl-6,7-dichloro-2-cyclopentyl-2,3-dihydro-1-oxo-1H-inden-5-yl)oxy]butanoic acid), which plugs the channel like a cork in a bottle by binding in the extracellular selectivity filter and sterically occluding ion conduction. Lipids may block conduction in closed heterohexameric channels. Its function is as follows. Essential component of the volume-regulated anion channel (VRAC, also named VSOAC channel), an anion channel required to maintain a constant cell volume in response to extracellular or intracellular osmotic changes. The VRAC channel conducts iodide better than chloride and can also conduct organic osmolytes like taurine. Mediates efflux of amino acids, such as aspartate and glutamate, in response to osmotic stress. In complex with LRRC8C or LRRC8E, acts as a transporter of immunoreactive cyclic dinucleotide GMP-AMP (2'-3'-cGAMP), an immune messenger produced in response to DNA virus in the cytosol: mediates both import and export of 2'-3'-cGAMP, thereby promoting transfer of 2'-3'-cGAMP to bystander cells. In contrast, complexes containing LRRC8D inhibit transport of 2'-3'-cGAMP. Required for in vivo channel activity, together with at least one other family member (LRRC8B, LRRC8C, LRRC8D or LRRC8E); channel characteristics depend on the precise subunit composition. Can form functional channels by itself (in vitro). Involved in B-cell development: required for the pro-B cell to pre-B cell transition. Also required for T-cell development. Required for myoblast differentiation: VRAC activity promotes membrane hyperpolarization and regulates insulin-stimulated glucose metabolism and oxygen consumption. Also acts as a regulator of glucose-sensing in pancreatic beta cells: VRAC currents, generated in response to hypotonicity- or glucose-induced beta cell swelling, depolarize cells, thereby causing electrical excitation, leading to increase glucose sensitivity and insulin secretion. Also plays a role in lysosome homeostasis by forming functional lysosomal VRAC channels in response to low cytoplasmic ionic strength condition: lysosomal VRAC channels are necessary for the formation of large lysosome-derived vacuoles, which store and then expel excess water to maintain cytosolic water homeostasis. Acts as a key factor in NLRP3 inflammasome activation by modulating itaconate efflux and mitochondria function. This is Volume-regulated anion channel subunit LRRC8A from Rattus norvegicus (Rat).